We begin with the raw amino-acid sequence, 367 residues long: Polyenoic acids biosynthesis gene cluster protein Ba17b (367 aa).

3 helical membrane-spanning segments follow: residues 16-36 (LEVF…LRFY), 50-70 (WLII…IGAV), and 90-110 (LVAF…TEGL). N133 carries N-linked (GlcNAc...) asparagine glycosylation. A run of 3 helical transmembrane segments spans residues 137-157 (LVLV…CTPF), 183-203 (FPNI…VWGL), and 211-231 (LVLV…GGDS). A glycan (N-linked (GlcNAc...) asparagine) is linked at N245. A helical transmembrane segment spans residues 259–279 (LIIWTVCEPGVYLIAACLLVY).

The protein belongs to the SAT4 family.

The protein localises to the membrane. Its pathway is secondary metabolite biosynthesis. In terms of biological role, part of the gene cluster that mediates the biosynthesis of (2Z,4E,6E,10E)-9-hydroxydodeca-2,4,6,10-tetraenoic acid (BAA), (2E,4E,6E,10E)-9-hydroxydodeca-2,4,6,10-tetraenoic acid (BAB), and (2Z,4E,6E)-octa-2,4,6-trienedioic acid (PBA). The highly reducing polyketide synthase Ba17a is sufficent to produce PBA and BAA. The still to be characterized protein Ba17b leads to an increased production of BAA as well as to the production of the new compound BAB. BAA does not possess insecticidal activity against G.mellonella larvae, however, both BAA and BAB increase the growth of Candida albicans and BAA can mitigate the fungicidal effects of fluconazole over C.albicans, suggesting that generalist pathogens such as M.anisopliae, can potentially manipulate the yeast microbiota found in arthropods (and anywhere else) by the activity of compounds as BAA and BAB. This Metarhizium anisopliae (Entomophthora anisopliae) protein is Polyenoic acids biosynthesis gene cluster protein Ba17b.